The chain runs to 209 residues: Methylthioribulose-1-phosphate dehydratase (209 aa).

Positions 99 and 101 each coordinate Zn(2+).

It belongs to the aldolase class II family. MtnB subfamily. It depends on Zn(2+) as a cofactor.

The catalysed reaction is 5-(methylsulfanyl)-D-ribulose 1-phosphate = 5-methylsulfanyl-2,3-dioxopentyl phosphate + H2O. Its pathway is amino-acid biosynthesis; L-methionine biosynthesis via salvage pathway; L-methionine from S-methyl-5-thio-alpha-D-ribose 1-phosphate: step 2/6. Catalyzes the dehydration of methylthioribulose-1-phosphate (MTRu-1-P) into 2,3-diketo-5-methylthiopentyl-1-phosphate (DK-MTP-1-P). In Leptospira biflexa serovar Patoc (strain Patoc 1 / Ames), this protein is Methylthioribulose-1-phosphate dehydratase.